Reading from the N-terminus, the 68-residue chain is Large ribosomal subunit protein bL35 (68 aa).

This sequence belongs to the bacterial ribosomal protein bL35 family.

This is Large ribosomal subunit protein bL35 from Rickettsia canadensis (strain McKiel).